A 393-amino-acid polypeptide reads, in one-letter code: NAD(P)H-quinone oxidoreductase subunit H, chloroplastic (393 aa).

Belongs to the complex I 49 kDa subunit family. As to quaternary structure, NDH is composed of at least 16 different subunits, 5 of which are encoded in the nucleus.

It is found in the plastid. Its subcellular location is the chloroplast thylakoid membrane. It carries out the reaction a plastoquinone + NADH + (n+1) H(+)(in) = a plastoquinol + NAD(+) + n H(+)(out). The enzyme catalyses a plastoquinone + NADPH + (n+1) H(+)(in) = a plastoquinol + NADP(+) + n H(+)(out). NDH shuttles electrons from NAD(P)H:plastoquinone, via FMN and iron-sulfur (Fe-S) centers, to quinones in the photosynthetic chain and possibly in a chloroplast respiratory chain. The immediate electron acceptor for the enzyme in this species is believed to be plastoquinone. Couples the redox reaction to proton translocation, and thus conserves the redox energy in a proton gradient. The polypeptide is NAD(P)H-quinone oxidoreductase subunit H, chloroplastic (Oenothera argillicola (Appalachian evening primrose)).